An 892-amino-acid polypeptide reads, in one-letter code: Translation initiation factor IF-2 (892 aa).

Residues 88–305 (KKRTFVKRDP…SLQQGFQKPA (218 aa)) are disordered. 2 stretches are compositionally biased toward basic and acidic residues: residues 93 to 159 (VKRD…KDKV) and 166 to 216 (DMTK…EENK). Residues 254–269 (GRGRNAKAARPAKKGK) show a composition bias toward basic residues. Residues 270 to 282 (HAESKADREEARA) are compositionally biased toward basic and acidic residues. A tr-type G domain is found at 391–560 (PRAPVVTIMG…LLQAEVLELK (170 aa)). A G1 region spans residues 400–407 (GHVDHGKT). Position 400–407 (400–407 (GHVDHGKT)) interacts with GTP. The segment at 425–429 (GITQH) is G2. The interval 446 to 449 (DTPG) is G3. GTP contacts are provided by residues 446–450 (DTPGH) and 500–503 (NKID). A G4 region spans residues 500-503 (NKID). The G5 stretch occupies residues 536 to 538 (SAK).

Belongs to the TRAFAC class translation factor GTPase superfamily. Classic translation factor GTPase family. IF-2 subfamily.

It is found in the cytoplasm. One of the essential components for the initiation of protein synthesis. Protects formylmethionyl-tRNA from spontaneous hydrolysis and promotes its binding to the 30S ribosomal subunits. Also involved in the hydrolysis of GTP during the formation of the 70S ribosomal complex. This chain is Translation initiation factor IF-2, found in Salmonella agona (strain SL483).